The following is a 375-amino-acid chain: Cobalt-precorrin-5B C(1)-methyltransferase (375 aa).

The protein belongs to the CbiD family.

The enzyme catalyses Co-precorrin-5B + S-adenosyl-L-methionine = Co-precorrin-6A + S-adenosyl-L-homocysteine. The protein operates within cofactor biosynthesis; adenosylcobalamin biosynthesis; cob(II)yrinate a,c-diamide from sirohydrochlorin (anaerobic route): step 6/10. In terms of biological role, catalyzes the methylation of C-1 in cobalt-precorrin-5B to form cobalt-precorrin-6A. This is Cobalt-precorrin-5B C(1)-methyltransferase from Fusobacterium nucleatum subsp. nucleatum (strain ATCC 25586 / DSM 15643 / BCRC 10681 / CIP 101130 / JCM 8532 / KCTC 2640 / LMG 13131 / VPI 4355).